Consider the following 313-residue polypeptide: Fructose-1,6-bisphosphatase class 1 (313 aa).

Residues E91, D112, L114, and D115 each contribute to the Mg(2+) site. Residues D115–S118, Y223, and K254 contribute to the substrate site. E260 contacts Mg(2+).

Belongs to the FBPase class 1 family. Homotetramer. Requires Mg(2+) as cofactor.

The protein localises to the cytoplasm. The enzyme catalyses beta-D-fructose 1,6-bisphosphate + H2O = beta-D-fructose 6-phosphate + phosphate. Its pathway is carbohydrate biosynthesis; gluconeogenesis. This Geobacter sulfurreducens (strain ATCC 51573 / DSM 12127 / PCA) protein is Fructose-1,6-bisphosphatase class 1.